A 150-amino-acid chain; its full sequence is Cytochrome c oxidase subunit 5A, mitochondrial (150 aa).

The transit peptide at 1 to 41 (MLGAALRRCAVAATARAGPRGLLHSAPTPGPAAAIQSVRCY) directs the protein to the mitochondrion. An SIFI-degron motif is present at residues 2 to 17 (LGAALRRCAVAATARA). N6-acetyllysine is present on residues Lys87 and Lys113. The residue at position 141 (Thr141) is a Phosphothreonine.

This sequence belongs to the cytochrome c oxidase subunit 5A family. Component of the cytochrome c oxidase (complex IV, CIV), a multisubunit enzyme composed of 14 subunits. The complex is composed of a catalytic core of 3 subunits MT-CO1, MT-CO2 and MT-CO3, encoded in the mitochondrial DNA, and 11 supernumerary subunits COX4I, COX5A, COX5B, COX6A, COX6B, COX6C, COX7A, COX7B, COX7C, COX8 and NDUFA4, which are encoded in the nuclear genome. The complex exists as a monomer or a dimer and forms supercomplexes (SCs) in the inner mitochondrial membrane with NADH-ubiquinone oxidoreductase (complex I, CI) and ubiquinol-cytochrome c oxidoreductase (cytochrome b-c1 complex, complex III, CIII), resulting in different assemblies (supercomplex SCI(1)III(2)IV(1) and megacomplex MCI(2)III(2)IV(2)). Interacts with AFG1L. Interacts with RAB5IF. In response to mitochondrial stress, the precursor protein is ubiquitinated by the SIFI complex in the cytoplasm before mitochondrial import, leading to its degradation. Within the SIFI complex, UBR4 initiates ubiquitin chain that are further elongated or branched by KCMF1.

The protein localises to the mitochondrion inner membrane. It functions in the pathway energy metabolism; oxidative phosphorylation. Its function is as follows. Component of the cytochrome c oxidase, the last enzyme in the mitochondrial electron transport chain which drives oxidative phosphorylation. The respiratory chain contains 3 multisubunit complexes succinate dehydrogenase (complex II, CII), ubiquinol-cytochrome c oxidoreductase (cytochrome b-c1 complex, complex III, CIII) and cytochrome c oxidase (complex IV, CIV), that cooperate to transfer electrons derived from NADH and succinate to molecular oxygen, creating an electrochemical gradient over the inner membrane that drives transmembrane transport and the ATP synthase. Cytochrome c oxidase is the component of the respiratory chain that catalyzes the reduction of oxygen to water. Electrons originating from reduced cytochrome c in the intermembrane space (IMS) are transferred via the dinuclear copper A center (CU(A)) of subunit 2 and heme A of subunit 1 to the active site in subunit 1, a binuclear center (BNC) formed by heme A3 and copper B (CU(B)). The BNC reduces molecular oxygen to 2 water molecules using 4 electrons from cytochrome c in the IMS and 4 protons from the mitochondrial matrix. This is Cytochrome c oxidase subunit 5A, mitochondrial (COX5A) from Cebuella pygmaea (Pygmy marmoset).